Here is a 380-residue protein sequence, read N- to C-terminus: Probable protein phosphatase 2C 2 (380 aa).

The PPM-type phosphatase domain occupies 69–339 (RSGSFADIGP…DNLTVIVICF (271 aa)). The Mn(2+) site is built by Asp-113, Gly-114, Asp-287, and Asp-330.

The protein belongs to the PP2C family. Mg(2+) serves as cofactor. It depends on Mn(2+) as a cofactor.

It catalyses the reaction O-phospho-L-seryl-[protein] + H2O = L-seryl-[protein] + phosphate. The enzyme catalyses O-phospho-L-threonyl-[protein] + H2O = L-threonyl-[protein] + phosphate. The chain is Probable protein phosphatase 2C 2 from Oryza sativa subsp. japonica (Rice).